A 1328-amino-acid polypeptide reads, in one-letter code: Tubulin polyglutamylase TTLL5 (1328 aa).

Residues 1-22 are disordered; sequence MPVVMARDLEETASSSEDEDLA. The TTL domain maps to 62-407; sequence RYHLSYKIVR…VCQDPAQRTS (346 aa). ATP is bound by residues lysine 180, 186–187, 208–211, and 221–223; these read RG, SRYI, and KFD. Arginine 186 contacts a protein. An L-glutamate-binding site is contributed by arginine 247. 268-269 contacts ATP; it reads TN. L-glutamate contacts are provided by tyrosine 270, serine 271, and lysine 293. The Mg(2+) site is built by aspartate 353, glutamate 366, and asparagine 368. Residues 378–488 are c-MTBD region; it reads PLDLKIKASM…RGGFIRIFPT (111 aa). Position 384 (lysine 384) interacts with L-glutamate. Disordered stretches follow at residues 411 to 436, 585 to 631, 834 to 853, 948 to 975, 1006 to 1032, 1085 to 1129, and 1212 to 1271; these read IYPSFESSRRNPFQKPQRTRPLSASD, AQPA…QAKY, HSKSSKNSSSYSDSGAKGDH, PALLLSPVPDNAPPSIHSGTQNVSPAGL, SSAKAAGSCHPHKHHSGIAKTQKEGED, RSSA…LQTG, and RISS…QLNG. Over residues 420 to 432 the composition is skewed to polar residues; the sequence is RNPFQKPQRTRPL. Acidic residues predominate over residues 597–617; that stretch reads ESEEEEEVGLDNDDEEQEASQ. The span at 838-847 shows a compositional bias: low complexity; that stretch reads SKNSSSYSDS. Polar residues-rich tracts occupy residues 1116-1128, 1214-1227, 1234-1248, and 1257-1271; these read THSSPPGSRSLQT, SSATTGGQKPNTLP, PNSSTLVSKPASNHK, and QRASKGSSAEGQLNG.

Belongs to the tubulin--tyrosine ligase family. In terms of assembly, interacts with the transcriptional coactivators NCOA1/SRC-1 and NCOA2/TIF2. Requires Mg(2+) as cofactor. Highly expressed in brain, kidney, liver, spleen and testis. Expressed in heart, lung, muscle and trachea.

It is found in the cell projection. The protein resides in the cilium. The protein localises to the cytoplasm. Its subcellular location is the cytoskeleton. It localises to the cilium basal body. It is found in the nucleus. The enzyme catalyses L-glutamyl-[protein] + L-glutamate + ATP = gamma-L-glutamyl-L-glutamyl-[protein] + ADP + phosphate + H(+). It catalyses the reaction (L-glutamyl)(n)-gamma-L-glutamyl-L-glutamyl-[protein] + L-glutamate + ATP = (L-glutamyl)(n+1)-gamma-L-glutamyl-L-glutamyl-[protein] + ADP + phosphate + H(+). In terms of biological role, polyglutamylase which modifies tubulin, generating polyglutamate side chains on the gamma-carboxyl group of specific glutamate residues within the C-terminal tail of tubulin. Preferentially mediates ATP-dependent initiation step of the polyglutamylation reaction over the elongation step. Preferentially modifies the alpha-tubulin tail over a beta-tail. Required for CCSAP localization to both polyglutamylated spindle and cilia microtubules. Increases the effects of transcriptional coactivator NCOA2/TIF2 in glucocorticoid receptor-mediated repression and induction and in androgen receptor-mediated induction. This Mus musculus (Mouse) protein is Tubulin polyglutamylase TTLL5.